The chain runs to 238 residues: Succinate dehydrogenase iron-sulfur subunit (238 aa).

A 2Fe-2S ferredoxin-type domain is found at 1–97; the sequence is MKLEFSIYRY…KIVIRPLPGL (97 aa). [2Fe-2S] cluster contacts are provided by Cys55, Cys60, and Cys75. Residues 139 to 169 form the 4Fe-4S ferredoxin-type domain; that stretch reads QREKLDGLYECILCACCSTSCPSFWWNPDKF. 3 residues coordinate [4Fe-4S] cluster: Cys149, Cys152, and Cys155. Cys159 lines the [3Fe-4S] cluster pocket. Trp164 contacts a ubiquinone. Cys206 and Cys212 together coordinate [3Fe-4S] cluster. Position 216 (Cys216) interacts with [4Fe-4S] cluster.

It belongs to the succinate dehydrogenase/fumarate reductase iron-sulfur protein family. Part of an enzyme complex containing four subunits: a flavoprotein, an iron-sulfur, cytochrome b-556, and a hydrophobic anchor protein. It depends on [2Fe-2S] cluster as a cofactor. Requires [3Fe-4S] cluster as cofactor. The cofactor is [4Fe-4S] cluster.

The catalysed reaction is a quinone + succinate = fumarate + a quinol. It functions in the pathway carbohydrate metabolism; tricarboxylic acid cycle; fumarate from succinate (bacterial route): step 1/1. Functionally, two distinct, membrane-bound, FAD-containing enzymes are responsible for the catalysis of fumarate and succinate interconversion; the fumarate reductase is used in anaerobic growth, and the succinate dehydrogenase is used in aerobic growth. The polypeptide is Succinate dehydrogenase iron-sulfur subunit (sdhB) (Salmonella typhimurium (strain LT2 / SGSC1412 / ATCC 700720)).